The primary structure comprises 158 residues: Methylated-DNA--protein-cysteine methyltransferase (158 aa).

Cysteine 126 serves as the catalytic Nucleophile; methyl group acceptor.

Belongs to the MGMT family.

It is found in the cytoplasm. The catalysed reaction is a 6-O-methyl-2'-deoxyguanosine in DNA + L-cysteinyl-[protein] = S-methyl-L-cysteinyl-[protein] + a 2'-deoxyguanosine in DNA. It catalyses the reaction a 4-O-methyl-thymidine in DNA + L-cysteinyl-[protein] = a thymidine in DNA + S-methyl-L-cysteinyl-[protein]. Its function is as follows. Involved in the cellular defense against the biological effects of O6-methylguanine (O6-MeG) and O4-methylthymine (O4-MeT) in DNA. Repairs the methylated nucleobase in DNA by stoichiometrically transferring the methyl group to a cysteine residue in the enzyme. This is a suicide reaction: the enzyme is irreversibly inactivated. This Methanosarcina mazei (strain ATCC BAA-159 / DSM 3647 / Goe1 / Go1 / JCM 11833 / OCM 88) (Methanosarcina frisia) protein is Methylated-DNA--protein-cysteine methyltransferase.